A 248-amino-acid polypeptide reads, in one-letter code: NH(3)-dependent NAD(+) synthetase (248 aa).

31 to 38 (GVSGGVDS) provides a ligand contact to ATP. D37 contacts Mg(2+). R114 lines the deamido-NAD(+) pocket. An ATP-binding site is contributed by T134. E139 contributes to the Mg(2+) binding site. 2 residues coordinate deamido-NAD(+): K147 and D154. Residues K163 and S185 each coordinate ATP. 236-237 (HK) is a binding site for deamido-NAD(+).

Belongs to the NAD synthetase family. Homodimer.

The enzyme catalyses deamido-NAD(+) + NH4(+) + ATP = AMP + diphosphate + NAD(+) + H(+). It participates in cofactor biosynthesis; NAD(+) biosynthesis; NAD(+) from deamido-NAD(+) (ammonia route): step 1/1. In terms of biological role, catalyzes the ATP-dependent amidation of deamido-NAD to form NAD. Uses ammonia as a nitrogen source. The sequence is that of NH(3)-dependent NAD(+) synthetase from Methanoregula boonei (strain DSM 21154 / JCM 14090 / 6A8).